A 670-amino-acid polypeptide reads, in one-letter code: Probable Rho-GTPase-activating protein 9 (670 aa).

The region spanning 3 to 392 is the F-BAR domain; that stretch reads DGFSNSFWSR…SFKNLDSLRD (390 aa). The tract at residues 141–161 is disordered; it reads NSKKSNLTDRKPIPTSRKSNK. The Rho-GAP domain occupies 425–622; the sequence is SSLTEDNLIV…DLINEFENLF (198 aa). Thr-640 bears the Phosphothreonine mark. Residues 641-663 show a composition bias toward polar residues; the sequence is PITTSPQKLKLPRSSSPCKNPSP. The interval 641–670 is disordered; sequence PITTSPQKLKLPRSSSPCKNPSPTRRFRPF. Residue Ser-645 is modified to Phosphoserine.

It is found in the cytoplasm. The protein is Probable Rho-GTPase-activating protein 9 (rga9) of Schizosaccharomyces pombe (strain 972 / ATCC 24843) (Fission yeast).